A 187-amino-acid polypeptide reads, in one-letter code: Pre-mRNA-splicing factor cwf7 (187 aa).

It belongs to the SPF27 family. In terms of assembly, belongs to the 40S cdc5-associated complex (or cwf complex), a spliceosome sub-complex reminiscent of a late-stage spliceosome composed of the U2, U5 and U6 snRNAs and at least brr2, cdc5, cwf2/prp3, cwf3/syf1, cwf4/syf3, cwf5/ecm2, spp42/cwf6, cwf7/spf27, cwf8, cwf9, cwf10, cwf11, cwf12, prp45/cwf13, cwf14, cwf15, cwf16, cwf17, cwf18, cwf19, cwf20, cwf21, cwf22, cwf23, cwf24, cwf25, cwf26, cyp7/cwf27, cwf28, cwf29/ist3, lea1, msl1, prp5/cwf1, prp10, prp12/sap130, prp17, prp22, sap61, sap62, sap114, sap145, slu7, smb1, smd1, smd3, smf1, smg1 and syf2.

It is found in the nucleus. Its function is as follows. Involved in mRNA splicing. The sequence is that of Pre-mRNA-splicing factor cwf7 (cwf7) from Schizosaccharomyces pombe (strain 972 / ATCC 24843) (Fission yeast).